Here is a 540-residue protein sequence, read N- to C-terminus: (13S,14R)-13-O-acetyl-1-hydroxy-N-methylcanadine 8-hydroxylase CYP82X1 (540 aa).

A helical transmembrane segment spans residues 15–35 (FSIILVTTVSIVLLYSVFFWV). Residue Cys483 participates in heme binding.

Belongs to the cytochrome P450 family. The cofactor is heme. In terms of tissue distribution, highly expressed in capsules. Expressed is stems.

Its subcellular location is the membrane. It catalyses the reaction (13S,14R)-13-O-acetyl-1-hydroxy-N-methylcanadine + reduced [NADPH--hemoprotein reductase] + O2 = (13S,14R)-13-O-acetyl-1,8-dihydroxy-N-methylcanadine + oxidized [NADPH--hemoprotein reductase] + H2O + H(+). The protein operates within alkaloid biosynthesis. Cytochrome P450 involved in the biosynthesis of the benzylisoquinoline alkaloid noscapine. Converts (13S,14R)-13-O-acetyl-1-hydroxy-N-methylcanadine to (13S,14R)-13-O-acetyl-1,8-dihydroxy-N-methylcanadine. In Papaver somniferum (Opium poppy), this protein is (13S,14R)-13-O-acetyl-1-hydroxy-N-methylcanadine 8-hydroxylase CYP82X1.